The following is a 313-amino-acid chain: tRNA pseudouridine synthase B (313 aa).

Residue aspartate 48 is the Nucleophile of the active site.

The protein belongs to the pseudouridine synthase TruB family. Type 1 subfamily.

The enzyme catalyses uridine(55) in tRNA = pseudouridine(55) in tRNA. In terms of biological role, responsible for synthesis of pseudouridine from uracil-55 in the psi GC loop of transfer RNAs. This is tRNA pseudouridine synthase B from Saccharophagus degradans (strain 2-40 / ATCC 43961 / DSM 17024).